The primary structure comprises 210 residues: Cilia- and flagella-associated protein 418 (210 aa).

Positions 1–77 (MAKDLDELLD…LINEIFEEPN (77 aa)) are required for interaction with FAM161A. The disordered stretch occupies residues 24–59 (LDLGERPKGGSGGGGTHSGDRNGAQEKDTLRSTETF). Positions 41 to 59 (SGDRNGAQEKDTLRSTETF) are enriched in basic and acidic residues.

Interacts (via N-terminus) with FAM161A (via central region); the interaction is direct.

It is found in the cytoplasm. The protein localises to the photoreceptor inner segment. Its function is as follows. May be involved in photoreceptor outer segment disk morphogenesis. This Rattus norvegicus (Rat) protein is Cilia- and flagella-associated protein 418.